Here is a 246-residue protein sequence, read N- to C-terminus: 1-(5-phosphoribosyl)-5-[(5-phosphoribosylamino)methylideneamino] imidazole-4-carboxamide isomerase (246 aa).

The active-site Proton acceptor is the aspartate 8. Aspartate 131 serves as the catalytic Proton donor.

This sequence belongs to the HisA/HisF family.

It localises to the cytoplasm. It catalyses the reaction 1-(5-phospho-beta-D-ribosyl)-5-[(5-phospho-beta-D-ribosylamino)methylideneamino]imidazole-4-carboxamide = 5-[(5-phospho-1-deoxy-D-ribulos-1-ylimino)methylamino]-1-(5-phospho-beta-D-ribosyl)imidazole-4-carboxamide. It participates in amino-acid biosynthesis; L-histidine biosynthesis; L-histidine from 5-phospho-alpha-D-ribose 1-diphosphate: step 4/9. The polypeptide is 1-(5-phosphoribosyl)-5-[(5-phosphoribosylamino)methylideneamino] imidazole-4-carboxamide isomerase (Chromobacterium violaceum (strain ATCC 12472 / DSM 30191 / JCM 1249 / CCUG 213 / NBRC 12614 / NCIMB 9131 / NCTC 9757 / MK)).